The following is a 462-amino-acid chain: S-alkyl-thiohydroximate lyase SUR1 (462 aa).

The protein belongs to the class-I pyridoxal-phosphate-dependent aminotransferase family. The cofactor is pyridoxal 5'-phosphate.

In terms of biological role, C-S lyase involved in glucosinolate biosynthesis. Converts S-(alkylacetohydroximoyl)-L-cysteine to thiohydroximate. Functions in auxin homeostasis. Probably required for glucosinolate activation in response to pathogens. The sequence is that of S-alkyl-thiohydroximate lyase SUR1 (SUR1) from Arabidopsis thaliana (Mouse-ear cress).